A 259-amino-acid polypeptide reads, in one-letter code: (3R)-3-hydroxyacyl-CoA dehydrogenase (259 aa).

NAD(+)-binding positions include 13-21 (LVTGAGSGI) and 40-41 (DL). At serine 58 the chain carries Phosphoserine. Position 72-74 (72-74 (ADV)) interacts with NAD(+). Substrate is bound at residue serine 154. Residue lysine 158 is modified to N6-succinyllysine. Tyrosine 167 acts as the Proton acceptor in catalysis. NAD(+) contacts are provided by residues 167–171 (YAASK) and 200–202 (ITT). Position 171 is an N6-succinyllysine (lysine 171).

Belongs to the short-chain dehydrogenases/reductases (SDR) family. As to quaternary structure, heterotetramer with CBR4; contains two molecules of HSD17B8 and CBR4.

It localises to the mitochondrion matrix. The enzyme catalyses a (3R)-3-hydroxyacyl-CoA + NAD(+) = a 3-oxoacyl-CoA + NADH + H(+). It carries out the reaction 17beta-estradiol + NAD(+) = estrone + NADH + H(+). The catalysed reaction is testosterone + NAD(+) = androst-4-ene-3,17-dione + NADH + H(+). It catalyses the reaction 17beta-hydroxy-5alpha-androstan-3-one + NAD(+) = 5alpha-androstan-3,17-dione + NADH + H(+). The protein operates within steroid biosynthesis; estrogen biosynthesis. It participates in lipid metabolism; fatty acid biosynthesis. Its pathway is lipid metabolism; mitochondrial fatty acid beta-oxidation. Its function is as follows. Required for the solubility and assembly of the heterotetramer 3-ketoacyl-[acyl carrier protein] (ACP) reductase functional complex (KAR or KAR1) that forms part of the mitochondrial fatty acid synthase (mtFAS). Alpha-subunit of the KAR complex that acts as scaffold protein required for the stability of carbonyl reductase type-4 (CBR4, beta-subunit of the KAR complex) and for its 3-ketoacyl-ACP reductase activity, thereby participating in mitochondrial fatty acid biosynthesis. Catalyzes the NAD-dependent conversion of (3R)-3-hydroxyacyl-CoA into 3-ketoacyl-CoA (3-oxoacyl-CoA) with no chain length preference; this enzymatic activity is not needed for the KAR function. Prefers (3R)-3-hydroxyacyl-CoA over (3S)-3-hydroxyacyl-CoA and displays enzymatic activity only in the presence of NAD(+). Cooperates with enoyl-CoA hydratase 1 in mitochondria, together they constitute an alternative route to the auxiliary enzyme pathways for the breakdown of Z-PUFA (cis polyunsaturated fatty acid) enoyl-esters. NAD-dependent 17-beta-hydroxysteroid dehydrogenase with highest activity towards estradiol (17beta-estradiol or E2). Has very low activity towards testosterone and dihydrotestosterone (17beta-hydroxy-5alpha-androstan-3-one). Primarily an oxidative enzyme, it can switch to a reductive mode determined in the appropriate physiologic milieu and catalyze the reduction of estrone (E1) to form biologically active 17beta-estradiol. The protein is (3R)-3-hydroxyacyl-CoA dehydrogenase (HSD17B8) of Canis lupus familiaris (Dog).